Reading from the N-terminus, the 214-residue chain is Adenylate kinase (214 aa).

Residue 10–15 (GAGKGT) coordinates ATP. Residues 30–59 (CTGDMLRAAVKAGSELGLKAKEIMDAGKLV) are NMP. AMP is bound by residues T31, R36, 57 to 59 (KLV), 85 to 88 (GFPR), and Q92. An LID region spans residues 122 to 159 (GRRVHAASGRVYHIKFNPPKVEDKDDVTGEELTIRKDD). Residues R123 and 132 to 133 (VY) contribute to the ATP site. R156 and R167 together coordinate AMP. An ATP-binding site is contributed by R200.

Belongs to the adenylate kinase family. In terms of assembly, monomer.

It is found in the cytoplasm. It carries out the reaction AMP + ATP = 2 ADP. It participates in purine metabolism; AMP biosynthesis via salvage pathway; AMP from ADP: step 1/1. In terms of biological role, catalyzes the reversible transfer of the terminal phosphate group between ATP and AMP. Plays an important role in cellular energy homeostasis and in adenine nucleotide metabolism. This Yersinia enterocolitica protein is Adenylate kinase.